Reading from the N-terminus, the 683-residue chain is MSSGTMKFNGYLRVRIGEAVGLQPTRWSLRHSLFKKGHQLLDPYLTVSVDQVRVGQTSTKQKTNKPTYNEEFCANVTDGGHLELAVFHETPLGYDHFVANCTLQFQELLRTTGASDTFEGWVDLEPEGKVFVVITLTGSFTEATLQRDRIFKHFTRKRQRAMRRRVHQINGHKFMATYLRQPTYCSHCREFIWGVFGKQGYQCQVCTCVVHKRCHHLIVTACTCQNNINKVDSKIAEQRFGINIPHKFSIHNYKVPTFCDHCGSLLWGIMRQGLQCKICKMNVHIRCQANVAPNCGVNAVELAKTLAGMGLQPGNISPTSKLVSRSTLRRQGKESSKEGNGIGVNSSNRLGIDNFEFIRVLGKGSFGKVMLARVKETGDLYAVKVLKKDVILQDDDVECTMTEKRILSLARNHPFLTQLFCCFQTPDRLFFVMEFVNGGDLMFHIQKSRRFDEARARFYAAEIISALMFLHDKGIIYRDLKLDNVLLDHEGHCKLADFGMCKEGICNGVTTATFCGTPDYIAPEILQEMLYGPAVDWWAMGVLLYEMLCGHAPFEAENEDDLFEAILNDEVVYPTWLHEDATGILKSFMTKNPTMRLGSLTQGGEHAILRHPFFKEIDWAQLNHRQIEPPFRPRIKSREDVSNFDPDFIKEEPVLTPIDEGHLPMINQDEFRNFSYVSPELQP.

One can recognise a C2 domain in the interval 1 to 118; sequence MSSGTMKFNG…LRTTGASDTF (118 aa). A phosphoserine; by autocatalysis mark is found at serine 28 and serine 32. 2 Phorbol-ester/DAG-type zinc fingers span residues 171–222 and 245–295; these read GHKF…VTAC and PHKF…APNC. Position 317 is a phosphoserine (serine 317). Residues 320–342 form a disordered region; that stretch reads SKLVSRSTLRRQGKESSKEGNGI. A Protein kinase domain is found at 355-614; it reads FEFIRVLGKG…EHAILRHPFF (260 aa). ATP-binding positions include 361–369 and lysine 384; that span reads LGKGSFGKV. Aspartate 479 (proton acceptor) is an active-site residue. Threonine 513 is modified (phosphothreonine; by PDPK1). The 69-residue stretch at 615–683 folds into the AGC-kinase C-terminal domain; that stretch reads KEIDWAQLNH…FSYVSPELQP (69 aa). Threonine 656 is subject to Phosphothreonine. The residue at position 675 (serine 675) is a Phosphoserine.

It belongs to the protein kinase superfamily. AGC Ser/Thr protein kinase family. PKC subfamily. Interacts with FYN. Interacts with RALA. Interacts with DGKQ. Interacts with PRKCH upstream open reading frame 2; the interaction leads to inhibition of kinase activity. As to expression, most abundant in lung, less in heart and skin.

It localises to the cytoplasm. It catalyses the reaction L-seryl-[protein] + ATP = O-phospho-L-seryl-[protein] + ADP + H(+). The catalysed reaction is L-threonyl-[protein] + ATP = O-phospho-L-threonyl-[protein] + ADP + H(+). Its activity is regulated as follows. Novel PKCs (PRKCD, PRKCE, PRKCH and PRKCQ) are calcium-insensitive, but activated by diacylglycerol (DAG) and phosphatidylserine. Three specific sites; Thr-513 (activation loop of the kinase domain), Thr-656 (turn motif) and Ser-675 (hydrophobic region), need to be phosphorylated for its full activation. Inhibited by PRKCH upstream open reading frame 2. Its function is as follows. Calcium-independent, phospholipid- and diacylglycerol (DAG)-dependent serine/threonine-protein kinase that is involved in the regulation of cell differentiation in keratinocytes and pre-B cell receptor, mediates regulation of epithelial tight junction integrity and foam cell formation, and is required for glioblastoma proliferation and apoptosis prevention in MCF-7 cells. In keratinocytes, binds and activates the tyrosine kinase FYN, which in turn blocks epidermal growth factor receptor (EGFR) signaling and leads to keratinocyte growth arrest and differentiation. Associates with the cyclin CCNE1-CDK2-CDKN1B complex and inhibits CDK2 kinase activity, leading to RB1 dephosphorylation and thereby G1 arrest in keratinocytes. In association with RALA activates actin depolymerization, which is necessary for keratinocyte differentiation. In the pre-B cell receptor signaling, functions downstream of BLNK by up-regulating IRF4, which in turn activates L chain gene rearrangement. Regulates epithelial tight junctions (TJs) by phosphorylating occludin (OCLN) on threonine residues, which is necessary for the assembly and maintenance of TJs. In association with PLD2 and via TLR4 signaling, is involved in lipopolysaccharide (LPS)-induced RGS2 down-regulation and foam cell formation. Upon PMA stimulation, mediates glioblastoma cell proliferation by activating the mTOR pathway, the PI3K/AKT pathway and the ERK1-dependent phosphorylation of ELK1. Involved in the protection of glioblastoma cells from irradiation-induced apoptosis by preventing caspase-9 activation. In camptothecin-treated MCF-7 cells, regulates NF-kappa-B upstream signaling by activating IKBKB, and confers protection against DNA damage-induced apoptosis. Promotes oncogenic functions of ATF2 in the nucleus while blocking its apoptotic function at mitochondria. Phosphorylates ATF2 which promotes its nuclear retention and transcriptional activity and negatively regulates its mitochondrial localization. The sequence is that of Protein kinase C eta type (PRKCH) from Homo sapiens (Human).